We begin with the raw amino-acid sequence, 502 residues long: RxLR effector protein BLN06 (502 aa).

Positions Met-1–Ala-20 are cleaved as a signal peptide. A glycan (N-linked (GlcNAc...) asparagine) is linked at Asn-38. Positions Leu-50–Arg-53 match the dEER motif.

Belongs to the RxLR effector family.

It is found in the secreted. It localises to the host cell membrane. In terms of biological role, secreted effector that triggers a robust hypersensitive response (HR) in Lactuca serriola LS102. The response to BLN06 was visible as chlorosis but not as strong necrosis. The chain is RxLR effector protein BLN06 from Bremia lactucae (Lettuce downy mildew).